The primary structure comprises 604 residues: uncharacterized protein (604 aa).

The first 40 residues, 1–40 (MWLQQRIKVFPGLLSSSWARRVLAVSGFLVIIYWYIFSGS), serve as a signal peptide directing secretion. At 41 to 563 (HYRSFWYSGK…EEHMAKQYRG (523 aa)) the chain is on the extracellular side. Asn337 carries an N-linked (GlcNAc...) asparagine glycan. A helical transmembrane segment spans residues 564 to 584 (LPFLFWFSVASLITLFHLFLF). The Cytoplasmic segment spans residues 585–604 (KLIYNEYCGPGAKPLFRSKV).

It localises to the membrane. This is an uncharacterized protein from Xenopus laevis (African clawed frog).